Reading from the N-terminus, the 424-residue chain is Enolase (424 aa).

Gln163 provides a ligand contact to (2R)-2-phosphoglycerate. The active-site Proton donor is the Glu205. Mg(2+)-binding residues include Asp242, Glu285, and Asp312. (2R)-2-phosphoglycerate is bound by residues Lys337, Arg366, Ser367, and Lys388. The Proton acceptor role is filled by Lys337.

The protein belongs to the enolase family. The cofactor is Mg(2+).

It localises to the cytoplasm. The protein resides in the secreted. It is found in the cell surface. The catalysed reaction is (2R)-2-phosphoglycerate = phosphoenolpyruvate + H2O. It participates in carbohydrate degradation; glycolysis; pyruvate from D-glyceraldehyde 3-phosphate: step 4/5. Catalyzes the reversible conversion of 2-phosphoglycerate (2-PG) into phosphoenolpyruvate (PEP). It is essential for the degradation of carbohydrates via glycolysis. This Sphingopyxis alaskensis (strain DSM 13593 / LMG 18877 / RB2256) (Sphingomonas alaskensis) protein is Enolase.